We begin with the raw amino-acid sequence, 441 residues long: Polyketide methyltransferase ustM (441 aa).

Residues 266-368 (LEVGAGLGGT…VRKLLRGGGF (103 aa)) form a methyltransferase (CMeT) domain region.

This sequence belongs to the methyltransferase superfamily.

Its pathway is secondary metabolite biosynthesis. Functionally, polyketide methyltransferase; part of the gene cluster that mediates the biosynthesis of ustilaginoidins, dimeric gamma-naphthopyrones isolated from different fungal species. The first step in the biosynthesis of ustilaginoidins is the production of gamma-naphthopyrone precursor YWA1 by the non-reducing polyketide synthase ustP, via condensation of one acetyl-CoA starter unit with 6 malonyl-CoA units. YWA1 is then probably substrate of the ustZ to yield norrubrofusarin via a dehydration reaction. A key enzyme in the biosynthetic pathway is the laccase ustL, which catalyzes the oxidative dimerization of norrubrofusarin to ustilaginoidin A. It can produce the M- and P-atropisomers in varying amounts, depending on the reaction conditions. For the biosynthesis of 3-methylustilaginoid in derivatives such as chaetochromin A, a methylated derivative of YWA1 is required. The C-methylation is considered to be catalyzed by ustM, the phosphopantetheine attachment site of which indicates that it acts on the growing polyketide chain before release of the product. For the biosynthesis of chaetochromin A, it is assumed that saturation of the D2 double bond takes place before dimerization, and is probably catalyzed by an external reductase because no candidate gene was identified within the cluster. The chain is Polyketide methyltransferase ustM from Ustilaginoidea virens (Rice false smut fungus).